A 228-amino-acid polypeptide reads, in one-letter code: MKSTRPFHPTPVITIDGPTASGKGTVAALVAAHLGFHLLDSGALYRLAALASMRYDIAAEDVDALVKLIDDLHITFREGCAQLDGVDVSNDIRAEAVGNRASAIAVHGPVRTALVARQRAFRKTPGLVADGRDMGTVIFPDAMLKVFLTASAEARAARRHKQLMQKGFSANIDDLLRDLRERDARDSNRAAAPLKPAADAKLLDTSALSVDEAVDQVLQWYRALGQPA.

17 to 25 (GPTASGKGT) serves as a coordination point for ATP.

Belongs to the cytidylate kinase family. Type 1 subfamily.

Its subcellular location is the cytoplasm. The catalysed reaction is CMP + ATP = CDP + ADP. The enzyme catalyses dCMP + ATP = dCDP + ADP. This is Cytidylate kinase from Burkholderia multivorans (strain ATCC 17616 / 249).